Consider the following 832-residue polypeptide: Sodium/hydrogen exchanger 3 (832 aa).

Positions 1-29 (MSGRGGCGPCWGLLLALVLALGALPWTQG) are cleaved as a signal peptide. At 30-50 (AEQEHHDEIQGFQIVTFKWHH) the chain is on the extracellular side. The helical transmembrane segment at 51-73 (VQDPYIIALWVLVASLAKIVFHL) threads the bilayer. Residues 74–81 (SHKVTSVV) lie on the Cytoplasmic side of the membrane. Residues 82 to 101 (PESALLIVLGLVLGGIVLAA) form a helical membrane-spanning segment. At 102-110 (DHIASFTLT) the chain is on the extracellular side. The helical transmembrane segment at 111–128 (PTVFFFYLLPPIVLDAGY) threads the bilayer. Topologically, residues 129 to 131 (FMP) are cytoplasmic. A helical membrane pass occupies residues 132 to 167 (NRLFFSNLGSILLYAVVGTVWNAATTGLSLYGVFLS). The a 1,2-diacyl-sn-glycero-3-phospho-(1D-myo-inositol) site is built by G140 and S141. The Extracellular portion of the chain corresponds to 168-180 (GIMGELKIGLLDF). A helical transmembrane segment spans residues 181 to 202 (LLFGSLIAAVDPVAVLAVFEEV). The Cytoplasmic segment spans residues 203-204 (HV). The chain crosses the membrane as a helical span at residues 205–236 (NEVLFIIVFGESLLNDAVTVVLYNVFQSFVTL). At 237–243 (GGDKVTG) the chain is on the extracellular side. Residues 244–278 (VDCVKGIVSFFVVSLGGTLVGVVFAFLLSLVTRFT) traverse the membrane as a helical segment. Topologically, residues 279–280 (KH) are cytoplasmic. The chain crosses the membrane as a helical span at residues 281–303 (VRVIEPGFVFIISYLSYLTSEML). At 304–305 (SL) the chain is on the extracellular side. Residues 306–322 (SSILAITFCGICCQKYV) traverse the membrane as a helical segment. Topologically, residues 323-329 (KANISEQ) are cytoplasmic. The chain crosses the membrane as a helical span at residues 330 to 358 (SATTVRYTMKMLASGAETIIFMFLGISAV). Residues 359–366 (DPLIWTWN) are Extracellular-facing. Residues 367 to 388 (TAFVLLTLLFVSVFRAIGVVLQ) form a helical membrane-spanning segment. Over 389–401 (TWLLNRYRMVQLE) the chain is Cytoplasmic. M397 is a binding site for a 1,2-diacyl-sn-glycero-3-phospho-(1D-myo-inositol). A helical transmembrane segment spans residues 402–425 (LIDQVVMSYGGLRGAVAFALVALL). Over 426–432 (DGNKVKE) the chain is Extracellular. A helical transmembrane segment spans residues 433 to 466 (KNLFVSTTIIVVFFTVIFQGLTIKPLVQWLKVKR). The Cytoplasmic segment spans residues 467 to 832 (SEHREPKLNE…GAEHPESTHM (366 aa)). A 1,2-diacyl-sn-glycero-3-phospho-(1D-myo-inositol) contacts are provided by Q496, I497, and H499. Phosphoserine is present on residues S554 and S562. The tract at residues 575–589 (RPSTVEASVSYLLRE) is interaction with EZR. Positions 590 to 667 (SASAVCLDMQ…RKRLESFKSA (78 aa)) are interaction with NHERF4. The interval 591 to 696 (ASAVCLDMQS…AQKRRNSSVP (106 aa)) is interaction with AHCYL1. S592 and S607 each carry phosphoserine. A Phosphoserine; by SGK1 modification is found at S663. The disordered stretch occupies residues 664–706 (FKSAKLGLGQSKKATKHKRERERAQKRRNSSVPNGKLPLDSPA). The span at 676-692 (KATKHKRERERAQKRRN) shows a compositional bias: basic residues. Phosphoserine occurs at positions 719, 813, and 816.

This sequence belongs to the monovalent cation:proton antiporter 1 (CPA1) transporter (TC 2.A.36) family. In terms of assembly, homodimer. Found in the forms of complex and dynamic macromolecular complexes. Interacts with CHP1; this interaction increases trafficking and activity at the plasma membrane of SLC9A3. Interacts with CHP2 and SHANK2. Interacts with NHERF4 and interaction decreases in response to elevated calcium ion levels. Binds NHERF1 and NHERF2. Interacts with PDZK1 (via C-terminal PDZ domain). Interacts with AHCYL1; interaction is required for SLC9A3 activity. Interacts with EZR; interaction targets SLC9A3 to the apical membrane. Interacts with SNX27 (via PDZ domains); directs SLC9A3 membrane insertion from early endosomes to the plasma membrane. In terms of processing, phosphorylated by PKA, which inhibits activity. Phosphorylation at Ser-663 by SGK1 is associated with increased abundance at the cell membrane and activity. Phosphorylation at Ser-719 by CSNK2A1 regulates SLC9A3 activity through the formation of multiple signaling complexes. As to expression, intestinal and kidney specific. Most abundant in kidney cortex, followed equally by ileum and ascending colon, then kidney medulla and jejunum. Is absent from duodenum and descending colon.

The protein localises to the apical cell membrane. It is found in the cell membrane. The protein resides in the recycling endosome membrane. It localises to the early endosome membrane. The enzyme catalyses Na(+)(in) + H(+)(out) = Na(+)(out) + H(+)(in). Its activity is regulated as follows. Seems to switch between active and inactive modes in response to various stimuli. Activated directly or indirectly by membrane phosphatidylinositol (PIs). Regulated by a variety of auxiliary proteins, which facilitate the maturation, cell surface expression and function of the transporter. Inhibited specifically by the drug tenapanor. Plasma membrane Na(+)/H(+) antiporter. Exchanges intracellular H(+) ions for extracellular Na(+) in 1:1 stoichiometry, playing a key role in salt and fluid absorption and pH homeostasis. Major apical Na(+)/H(+) exchanger in kidney and intestine playing an important role in renal and intestine Na(+) absorption and blood pressure regulation. The protein is Sodium/hydrogen exchanger 3 (SLC9A3) of Oryctolagus cuniculus (Rabbit).